Here is a 75-residue protein sequence, read N- to C-terminus: DNA-directed RNA polymerase subunit omega (75 aa).

It belongs to the RNA polymerase subunit omega family. In terms of assembly, in cyanobacteria the RNAP catalytic core is composed of 2 alpha, 1 beta, 1 beta', 1 gamma and 1 omega subunit. When a sigma factor is associated with the core the holoenzyme is formed, which can initiate transcription.

It catalyses the reaction RNA(n) + a ribonucleoside 5'-triphosphate = RNA(n+1) + diphosphate. In terms of biological role, promotes RNA polymerase assembly. Latches the N- and C-terminal regions of the beta' subunit thereby facilitating its interaction with the beta and alpha subunits. The chain is DNA-directed RNA polymerase subunit omega from Synechococcus sp. (strain CC9605).